Here is a 310-residue protein sequence, read N- to C-terminus: Protoheme IX farnesyltransferase (310 aa).

A run of 9 helical transmembrane segments spans residues 26-46 (VMSL…ATVH), 47-67 (PMIA…SGAL), 95-115 (GEAL…LGLA), 118-138 (LFAA…YSMW), 147-167 (IVIG…VATG), 174-194 (LFMF…LALF), 220-240 (VLAY…TGIG), 243-263 (LYLV…VRIW), and 281-301 (FFRF…AEAA).

Belongs to the UbiA prenyltransferase family. Protoheme IX farnesyltransferase subfamily. Interacts with CtaA.

Its subcellular location is the cell inner membrane. The enzyme catalyses heme b + (2E,6E)-farnesyl diphosphate + H2O = Fe(II)-heme o + diphosphate. It participates in porphyrin-containing compound metabolism; heme O biosynthesis; heme O from protoheme: step 1/1. Its function is as follows. Converts heme B (protoheme IX) to heme O by substitution of the vinyl group on carbon 2 of heme B porphyrin ring with a hydroxyethyl farnesyl side group. The chain is Protoheme IX farnesyltransferase from Cereibacter sphaeroides (strain ATCC 17025 / ATH 2.4.3) (Rhodobacter sphaeroides).